The following is an 83-amino-acid chain: Cardiotoxin 7a (83 aa).

Positions 1–21 (MKTLLLTLVVVTIVCLDLGYT) are cleaved as a signal peptide. Disulfide bonds link Cys24/Cys43, Cys36/Cys61, Cys65/Cys76, and Cys77/Cys82.

This sequence belongs to the three-finger toxin family. Short-chain subfamily. Orphan group XV sub-subfamily. Expressed by the venom gland.

The protein resides in the secreted. Its subcellular location is the target cell membrane. Has low cytotoxic activity. The polypeptide is Cardiotoxin 7a (Naja atra (Chinese cobra)).